Reading from the N-terminus, the 297-residue chain is D-alanine--D-alanine ligase (297 aa).

Positions 103 to 293 (KEILMHHRMP…FDSFVKSILE (191 aa)) constitute an ATP-grasp domain. 129 to 180 (ISFPVAVKPSSGGSSIATFKVKSLEELENAYQQASKHGEVMIEQWVTGKEIT) contributes to the ATP binding site. Mg(2+) contacts are provided by aspartate 247, glutamate 260, and asparagine 262.

This sequence belongs to the D-alanine--D-alanine ligase family. Mg(2+) is required as a cofactor. The cofactor is Mn(2+).

Its subcellular location is the cytoplasm. The catalysed reaction is 2 D-alanine + ATP = D-alanyl-D-alanine + ADP + phosphate + H(+). The protein operates within cell wall biogenesis; peptidoglycan biosynthesis. Cell wall formation. The sequence is that of D-alanine--D-alanine ligase from Francisella philomiragia subsp. philomiragia (strain ATCC 25017 / CCUG 19701 / FSC 153 / O#319-036).